We begin with the raw amino-acid sequence, 287 residues long: Seed leukoagglutinin (287 aa).

Residues 1–29 (MATSNSKPTQVLLATFLTFFFLLLNNVNS) form the signal peptide. Tyrosine 74 lines the N-acetyl-alpha-neuraminyl-(2-&gt;3)-beta-D-galactosyl-(1-&gt;4)-beta-D-glucose pocket. Asparagine 90 carries an N-linked (GlcNAc...) (paucimannose) asparagine glycan. Residues aspartate 116, serine 133, and lysine 136 each coordinate N-acetyl-alpha-neuraminyl-(2-&gt;3)-beta-D-galactosyl-(1-&gt;4)-beta-D-glucose. Asparagine 142 carries an N-linked (GlcNAc...) (paucimannose) asparagine glycan. 2 residues coordinate Mn(2+): glutamate 156 and aspartate 158. Ca(2+)-binding residues include aspartate 158, tyrosine 160, aspartate 166, and aspartate 169. Residues tyrosine 160 and aspartate 166 each coordinate N-acetyl-alpha-neuraminyl-(2-&gt;3)-beta-D-galactosyl-(1-&gt;4)-beta-D-glucose. Mn(2+)-binding residues include aspartate 169 and histidine 174. Asparagine 208 carries an N-linked (GlcNAc...) (high mannose) asparagine; partial glycan. A glycan (N-linked (GlcNAc...) (paucimannose) asparagine; partial) is linked at asparagine 220. Residue glutamate 253 participates in N-acetyl-alpha-neuraminyl-(2-&gt;3)-beta-D-galactosyl-(1-&gt;4)-beta-D-glucose binding. The propeptide at 279 to 287 (NVHIARYTA) is removed in mature form.

This sequence belongs to the leguminous lectin family. Homodimer; disulfide-linked. Dimer of homodimers. The glycosylation on N-90 is determined to by of the high mannose type in PubMed:26003537, while PubMed:27720757 found a paucimannose at this position. In terms of processing, processed at its C-terminus.

Sialic acid-binding lectin recognizing oligosaccharides containing terminal sialic acid linked via alpha-2,3 bond to penultimate galactose residues. Binds the trisaccharide sequence Neu5Ac-alpha-2,3-Gal-beta-1,4-GlcNAc. Binds fetuin when fully glycosylated but not when the high mannose-type glycans are removed, although the secondary structure is virtually unaffected by deglycosylation of the high mannose-type glycans. The lectin activity may depend on the presence of a single GlcNAc attached to N-90. The protein is Seed leukoagglutinin of Maackia amurensis (Amur maackia).